The following is an 806-amino-acid chain: Leucine--tRNA ligase (806 aa).

The 'HIGH' region motif lies at P40 to H51. Residues K576–S580 carry the 'KMSKS' region motif. K579 contacts ATP.

This sequence belongs to the class-I aminoacyl-tRNA synthetase family.

It is found in the cytoplasm. It catalyses the reaction tRNA(Leu) + L-leucine + ATP = L-leucyl-tRNA(Leu) + AMP + diphosphate. This chain is Leucine--tRNA ligase, found in Chlorobium phaeobacteroides (strain BS1).